A 117-amino-acid chain; its full sequence is Large ribosomal subunit protein bL20c (117 aa).

Belongs to the bacterial ribosomal protein bL20 family.

Its subcellular location is the plastid. It is found in the chloroplast. Binds directly to 23S ribosomal RNA and is necessary for the in vitro assembly process of the 50S ribosomal subunit. It is not involved in the protein synthesizing functions of that subunit. The polypeptide is Large ribosomal subunit protein bL20c (Gossypium hirsutum (Upland cotton)).